A 259-amino-acid chain; its full sequence is Ubiquitin-conjugating enzyme E2 J2 (259 aa).

The Cytoplasmic portion of the chain corresponds to 1–226 (MSSNSVKRAP…AGLQQANRHH (226 aa)). The UBC core domain occupies 12-162 (TATQRLKQDY…DKVFCELFPE (151 aa)). The active-site Glycyl thioester intermediate is the Cys-94. The segment at 174–200 (QDELSSRPQALPLPDVVPDGETHHGQH) is disordered. Residues 227 to 247 (GLLGGALANLFVIVGFAAFAY) form a helical; Anchor for type IV membrane protein membrane-spanning segment. Over 248–259 (TVKYVLRSIAQE) the chain is Lumenal.

The protein belongs to the ubiquitin-conjugating enzyme family.

It is found in the endoplasmic reticulum membrane. It carries out the reaction S-ubiquitinyl-[E1 ubiquitin-activating enzyme]-L-cysteine + [E2 ubiquitin-conjugating enzyme]-L-cysteine = [E1 ubiquitin-activating enzyme]-L-cysteine + S-ubiquitinyl-[E2 ubiquitin-conjugating enzyme]-L-cysteine.. The protein operates within protein modification; protein ubiquitination. Its function is as follows. Catalyzes the covalent attachment of ubiquitin to other proteins. Seems to function in the selective degradation of misfolded membrane proteins from the endoplasmic reticulum (ERAD). In cooperation with the GATOR2 complex, catalyzes 'Lys-6'-linked ubiquitination of NPRL2. The polypeptide is Ubiquitin-conjugating enzyme E2 J2 (UBE2J2) (Bos taurus (Bovine)).